Consider the following 351-residue polypeptide: Photosystem II D2 protein (351 aa).

A helical transmembrane segment spans residues 39–59 (TAYLAIGGWLTGTTFVTSWYT). His116 provides a ligand contact to chlorophyll a. A helical membrane pass occupies residues 123-139 (GFMLRQFEIARLVGIRP). Pheophytin a contacts are provided by Gln128 and Asn141. A helical membrane pass occupies residues 151 to 164 (VFVSVFLMYPLGQS). Position 196 (His196) interacts with chlorophyll a. A helical transmembrane segment spans residues 206-226 (GALLCAIHGATVENTLFEDGE). Positions 213 and 260 each coordinate a plastoquinone. Residue His213 participates in Fe cation binding. His267 contacts Fe cation. Residues 277 to 293 (GLWTSSIGIIGLALNLR) form a helical membrane-spanning segment.

The protein belongs to the reaction center PufL/M/PsbA/D family. PSII is composed of 1 copy each of membrane proteins PsbA, PsbB, PsbC, PsbD, PsbE, PsbF, PsbH, PsbI, PsbJ, PsbK, PsbL, PsbM, PsbT, PsbX, PsbY, PsbZ, Psb30/Ycf12, peripheral proteins PsbO, CyanoQ (PsbQ), PsbU, PsbV and a large number of cofactors. It forms dimeric complexes. The D1/D2 heterodimer binds P680, chlorophylls that are the primary electron donor of PSII, and subsequent electron acceptors. It shares a non-heme iron and each subunit binds pheophytin, quinone, additional chlorophylls, carotenoids and lipids. There is also a Cl(-1) ion associated with D1 and D2, which is required for oxygen evolution. The PSII complex binds additional chlorophylls, carotenoids and specific lipids. is required as a cofactor.

The protein localises to the cellular thylakoid membrane. It catalyses the reaction 2 a plastoquinone + 4 hnu + 2 H2O = 2 a plastoquinol + O2. Functionally, photosystem II (PSII) is a light-driven water:plastoquinone oxidoreductase that uses light energy to abstract electrons from H(2)O, generating O(2) and a proton gradient subsequently used for ATP formation. It consists of a core antenna complex that captures photons, and an electron transfer chain that converts photonic excitation into a charge separation. The D1/D2 (PsbA/PsbD) reaction center heterodimer binds P680, the primary electron donor of PSII as well as several subsequent electron acceptors. D2 is needed for assembly of a stable PSII complex. This chain is Photosystem II D2 protein, found in Synechococcus sp. (strain CC9605).